We begin with the raw amino-acid sequence, 257 residues long: Capsid protein (257 aa).

The Bipartite nuclear localization signal motif lies at 3 to 20 (KRTGDILISTPVSKVRRK). The short motif at 40–54 (KRRSWTYRPMYRKPR) is the Nuclear localization signal element. Residues 68 to 85 (CEGPCKVQSYEQRDDVKH) fold into a zinc finger. The short motif at 101–122 (ITHRVGKRFCIKSIYILGKIWM) is the Nuclear export signal element. Positions 201–248 (KRFFKVNTHVVYNHQEQAKYENHTENALLLYMACTHASNPVYATLKIR) match the Bipartite nuclear localization signal motif.

The protein belongs to the geminiviridae capsid protein family. As to quaternary structure, homomultimer. Binds to single-stranded and double-stranded viral DNA. Interacts (via nuclear localization signals) with host importin alpha-1a.

It is found in the virion. The protein localises to the host nucleus. Functionally, encapsidates the viral genome into characteristic twinned ('geminate') particles. Binds the genomic viral ssDNA and shuttles it into and out of the cell nucleus. Plays a role in protection of the genome from degradation, virus acquisition and transmission by insect vectors, infectivity, and systemic movement. The CP of monopartite geminiviruses is absolutely essential for virus movement. The protein is Capsid protein of Tomato yellow leaf curl Sardinia virus (isolate Spain-1) (TYLCSV).